The following is a 656-amino-acid chain: Putative L-type lectin-domain containing receptor kinase V.2 (656 aa).

The signal sequence occupies residues 1–23; that stretch reads MSLLLKMLLFSLFFFYMASISQC. Topologically, residues 24 to 276 are extracellular; it reads SDPTGGQFSF…EDQERSLSSK (253 aa). A legume-lectin like region spans residues 29–248; sequence GQFSFNGYLY…SHYILGWSFN (220 aa). Asn78, Asn124, Asn159, Asn190, and Asn257 each carry an N-linked (GlcNAc...) asparagine glycan. The chain crosses the membrane as a helical span at residues 277 to 297; sequence ILAISLSISGVTLVIVLILGV. Residues 298–656 are Cytoplasmic-facing; sequence MLFLKRKKFL…MTESFLSSGR (359 aa). Residues 334-615 form the Protein kinase domain; sequence FKNSEVLGKG…GVATLPHNLL (282 aa). ATP contacts are provided by residues 340–348 and Lys363; that span reads LGKGGFGKV. The active-site Proton acceptor is the Asp459.

In the C-terminal section; belongs to the protein kinase superfamily. Ser/Thr protein kinase family. The protein in the N-terminal section; belongs to the leguminous lectin family.

Its subcellular location is the cell membrane. The catalysed reaction is L-seryl-[protein] + ATP = O-phospho-L-seryl-[protein] + ADP + H(+). The enzyme catalyses L-threonyl-[protein] + ATP = O-phospho-L-threonyl-[protein] + ADP + H(+). This is Putative L-type lectin-domain containing receptor kinase V.2 (LECRK52) from Arabidopsis thaliana (Mouse-ear cress).